A 42-amino-acid polypeptide reads, in one-letter code: Aryl-alcohol dehydrogenase (42 aa).

This sequence belongs to the zinc-containing alcohol dehydrogenase family. Homodimer. Zn(2+) serves as cofactor.

It catalyses the reaction an aromatic primary alcohol + NAD(+) = an aromatic aldehyde + NADH + H(+). Oxidizes primary alcohols with an aromatic or cyclohex-1-ene ring. It is highly specific for benzyl alcohol. The protein is Aryl-alcohol dehydrogenase of Acinetobacter guillouiae (Acinetobacter genomosp. 11).